Consider the following 583-residue polypeptide: MKAIIVLLMVVTSNADRICTGITSSNSPHVVKTATQGEVNVTGVIPLTTTPTKSHFANLKGTKTRGKLCPNCLNCTDLDVALGRPKCMGTIPSAKASILHEVKPVTSGCFPIMHDRTKIRQLPNLLRGYENIRLSTRNVINAERAPGGPYIIGTSGSCPNVTNGNGFFATMAWAVPKDNKTATNPLTVEVPYICTKGEDQITVWGFHSDNEAQMVKLYGDSKPQKFTSSANGVTTHYVSQIGGFPNQTEDGGLPQSGRIVVDYMVQKPGKTGTIVYQRGVLLPQKVWCASGRSKVIKGSLPLIGEADCLHEKYGGLNKSKPYYTGEHAKAIGNCPIWVKTPLKLANGTKYRPPAKLLKERGFFGAIAGFLEGGWEGMIAGWHGYTSHGAHGVAVAADLKSTQEAINKITKNLNSLSELEVKNLQRLSGAMDELHNEILELDEKVDDLRADTISSQIELAVLLSNEGIINSEDEHLLALERKLKKMLGPSAVDIGNGCFETKHKCNQTCLDRIAAGTFNAGEFSLPTFDSLNITAASLNDDGLDNHTILLYYSTAASSLAVTLMIAIFIVYMVSRDNVSCSICL.

The N-terminal stretch at 1–15 (MKAIIVLLMVVTSNA) is a signal peptide. Residues 16–551 (DRICTGITSS…LDNHTILLYY (536 aa)) lie on the Extracellular side of the membrane. 4 disulfides stabilise this stretch: C19–C497, C75–C87, C109–C158, and C504–C508. 2 N-linked (GlcNAc...) asparagine; by host glycosylation sites follow: N40 and N74. N-linked (GlcNAc...) asparagine; by host glycans are attached at residues N160, N179, N246, N317, N346, N505, N531, and N544. Residues 552 to 572 (STAASSLAVTLMIAIFIVYMV) traverse the membrane as a helical segment. Residues 573–583 (SRDNVSCSICL) are Cytoplasmic-facing. S-palmitoyl cysteine; by host attachment occurs at residues C579 and C582.

The protein belongs to the influenza viruses hemagglutinin family. In terms of assembly, homotrimer of disulfide-linked HA1-HA2. Post-translationally, palmitoylated. In natural infection, inactive HA is matured into HA1 and HA2 outside the cell by one or more trypsin-like, arginine-specific endoprotease secreted by the bronchial epithelial cells. One identified protease that may be involved in this process is secreted in lungs by club cells.

It is found in the virion membrane. The protein localises to the host apical cell membrane. Its function is as follows. Binds to sialic acid-containing receptors on the cell surface, bringing about the attachment of the virus particle to the cell. Plays a major role in the determination of host range restriction and virulence. Class I viral fusion protein. Responsible for penetration of the virus into the cell cytoplasm by mediating the fusion of the membrane of the endocytosed virus particle with the endosomal membrane. Low pH in endosomes induce an irreversible conformational change in HA2, releasing the fusion hydrophobic peptide. Several trimers are required to form a competent fusion pore. This is Hemagglutinin from Homo sapiens (Human).